Consider the following 209-residue polypeptide: MIRFITLQNLMDYQVTLKLMEDYVNKVINDNEPEIVYLVEHSEVYTAGTNYKQEELLNYDDIPVIYTGRGGKFTFHGPGQRVIYPILNLALPNRHKDLKLYIKMLEEWIINSLNYFGIKGYLIKDKVGIWIKVNKGEFAKIAAIGVRVRKWVTYHGIAINISTDLCKFNGIIPCGLESSLVTSLNQLGIYVEMSEFDKIIQTEFNKIFK.

A BPL/LPL catalytic domain is found at 30–209; it reads DNEPEIVYLV…IQTEFNKIFK (180 aa). Residues 69–76, 143–145, and 156–158 each bind substrate; these read RGGKFTFH, AIG, and GIA. The Acyl-thioester intermediate role is filled by Cys-174.

Belongs to the LipB family.

It localises to the cytoplasm. It catalyses the reaction octanoyl-[ACP] + L-lysyl-[protein] = N(6)-octanoyl-L-lysyl-[protein] + holo-[ACP] + H(+). It participates in protein modification; protein lipoylation via endogenous pathway; protein N(6)-(lipoyl)lysine from octanoyl-[acyl-carrier-protein]: step 1/2. In terms of biological role, catalyzes the transfer of endogenously produced octanoic acid from octanoyl-acyl-carrier-protein onto the lipoyl domains of lipoate-dependent enzymes. Lipoyl-ACP can also act as a substrate although octanoyl-ACP is likely to be the physiological substrate. In Rickettsia prowazekii (strain Madrid E), this protein is Octanoyltransferase.